Consider the following 429-residue polypeptide: MTAALAVVTTSGLEDGVPRSRGEGTGEVVLERGPGAAYHMFVVMEDLVEKLKLLRYEEEFLRKSNLKAPSRHYFALPTNPGEQFYMFCTLAAWLINKAGRPFEQPQEYDDPNATISNILSELRSFGRTADFPPSKLKSGYGEHVCYVLDCFAEEALKYIGFTWKRPIYPVEELEEESVAEDDAELTLNKVDEEFVEEETDNEENFIDLNVLKAQTYHLDMNETAKQEDILESTTDAAEWSLEVERVLPQLKVTIRTDNKDWRIHVDQMHQHRSGIESALKETKGFLDKLHNEITRTLEKISSREKYINNQLENLVQEYRAAQAQLSEAKERYQQGNGGVTERTRLLSEVMEELEKVKQEMEEKGSSMTDGAPLVKIKQSLTKLKQETVEMDIRIGIVEHTLLQSKLKEKSNMTRNMHATVIPEPATGFY.

Residues 304–369 adopt a coiled-coil conformation; sequence EKYINNQLEN…MEEKGSSMTD (66 aa). Positions 335 to 426 are pDED; it reads GNGGVTERTR…HATVIPEPAT (92 aa).

The protein belongs to the IFT57 family. In terms of assembly, component of the IFT complex B, at least composed of IFT20, IFT22, IFT25, IFT27, IFT46, IFT52, TRAF3IP1/IFT54, IFT57, IFT74, IFT80, IFT81, and IFT88. Interacts with IFT20. Interacts with IFT88. Interacts with IFT80, IFT-81, IFT74, IFT172, IFT70B and KIF17. Interacts with BLOC1S2. Interacts with RYBP. Interacts with HOMER1; the interaction possibly prevents the pro-apoptotic effects of IFT57. Interacts with HIP1. In normal conditions, it poorly interacts with HIP1, HIP1 being strongly associated with HTT. However, in mutant HTT proteins with a long poly-Gln region, interaction between HTT and HIP1 is inhibited, promoting the interaction between HIP1 and IFT57, leading to apoptosis. Interacts with BFAR. Interacts with TTC25. Interacts with USH1G. Interacts with chicken anemia virus protein apoptin. In terms of tissue distribution, present in many tissues such as brain, thymus, lymph node, lung, liver, skin and kidney (at protein level).

It is found in the cell projection. It localises to the cilium. The protein localises to the cytoplasm. Its subcellular location is the cytoskeleton. The protein resides in the cilium basal body. In terms of biological role, required for the formation of cilia. Plays an indirect role in sonic hedgehog signaling, cilia being required for all activity of the hedgehog pathway. Has pro-apoptotic function via its interaction with HIP1, leading to recruit caspase-8 (CASP8) and trigger apoptosis. Has the ability to bind DNA sequence motif 5'-AAAGACATG-3' present in the promoter of caspase genes such as CASP1, CASP8 and CASP10, suggesting that it may act as a transcription regulator; however the relevance of such function remains unclear. In Homo sapiens (Human), this protein is Intraflagellar transport protein 57 homolog (IFT57).